The following is a 198-amino-acid chain: MQFEVKDLINKIKKDGLDEAERLASEIILNAKQEAEAIILKAESEAKELKIKAEKEAYDYKRYSLEASRQAFRDLVIGTENSIKSLFKSALKDSVSSVYDSNFLRELIIRVLDVWGKDDKIDIMLNESDIDNLSSILKTSIRNKFGAEIEIKPFKGINKGFKVQQRDGSLYYDFTSEAIADILFEYLNPRFKEIIKLD.

This sequence belongs to the V-ATPase E subunit family.

Produces ATP from ADP in the presence of a proton gradient across the membrane. The polypeptide is V-type proton ATPase subunit E (Borrelia recurrentis (strain A1)).